Consider the following 175-residue polypeptide: CDP-archaeol synthase (175 aa).

Transmembrane regions (helical) follow at residues 41–61, 82–102, 122–142, and 150–170; these read GLFS…WLSS, LIVV…KSFF, FVVG…VSNF, and VIII…LIGV.

The protein belongs to the CDP-archaeol synthase family. Mg(2+) is required as a cofactor.

The protein resides in the cell membrane. It carries out the reaction 2,3-bis-O-(geranylgeranyl)-sn-glycerol 1-phosphate + CTP + H(+) = CDP-2,3-bis-O-(geranylgeranyl)-sn-glycerol + diphosphate. It participates in membrane lipid metabolism; glycerophospholipid metabolism. Its function is as follows. Catalyzes the formation of CDP-2,3-bis-(O-geranylgeranyl)-sn-glycerol (CDP-archaeol) from 2,3-bis-(O-geranylgeranyl)-sn-glycerol 1-phosphate (DGGGP) and CTP. This reaction is the third ether-bond-formation step in the biosynthesis of archaeal membrane lipids. The sequence is that of CDP-archaeol synthase from Methanosarcina barkeri (strain Fusaro / DSM 804).